Reading from the N-terminus, the 142-residue chain is Large ribosomal subunit protein uL13 (142 aa).

Belongs to the universal ribosomal protein uL13 family. As to quaternary structure, part of the 50S ribosomal subunit.

Its function is as follows. This protein is one of the early assembly proteins of the 50S ribosomal subunit, although it is not seen to bind rRNA by itself. It is important during the early stages of 50S assembly. The sequence is that of Large ribosomal subunit protein uL13 from Opitutus terrae (strain DSM 11246 / JCM 15787 / PB90-1).